The following is a 157-amino-acid chain: MSINCWRSPNRAIGKSSGGVIMFKTILFPLDRSREARDAAQMVADLVKIHQSQLILLSVVEKNPPGQDHEAHGMDSPEAVAKLLEAAQAVFSQQGIATKTIEREGMASFTICDVADEVNADLIVMGCRGLGLTTEGVAESVTARVINLSPCPVLVVP.

Belongs to the universal stress protein A family.

This is Universal stress protein Sll1654 from Synechocystis sp. (strain ATCC 27184 / PCC 6803 / Kazusa).